The following is a 151-amino-acid chain: Class I hydrophobin A (151 aa).

The first 17 residues, M1 to A17, serve as a signal peptide directing secretion. 4 cysteine pairs are disulfide-bonded: C52–C125, C60–C119, C61–C101, and C126–C144.

It belongs to the fungal hydrophobin family. Interacts with cutinase cutL1 in a pH-dependent manner. Self-assembles to form functional amyloid fibrils called rodlets. Self-assembly into fibrillar rodlets occurs spontaneously at hydrophobic:hydrophilic interfaces and the rodlets further associate laterally to form amphipathic monolayers. rolA rodlet formation is regulated by the strength of ionic interactions between rolA molecules. Three types of self-assembled structures of rolA are observed: spherical, rod-like, and mesh-like.

The protein localises to the secreted. It is found in the cell wall. Aerial growth, conidiation, and dispersal of filamentous fungi in the environment rely upon a capability of their secreting small amphipathic proteins called hydrophobins (HPBs) with low sequence identity. Class I can self-assemble into an outermost layer of rodlet bundles on aerial cell surfaces, conferring cellular hydrophobicity that supports fungal growth, development and dispersal; whereas Class II form highly ordered films at water-air interfaces through intermolecular interactions but contribute nothing to the rodlet structure. RolA is a class I hydrophobin that undergoes a conformational change after its adsorption to hydrophobic surfaces such as the biodegradable polyester polybutylene succinate-coadipate (PBSA) and recruits the cutinase cutL1, resulting in condensation of cutL1 on the PBSA surface and consequent stimulation of PBSA hydrolysis. Increases also the activity of polyethylene terephthalate hydrolase (PETase) that hydrolyzes polyethylene terephthalate (PET), one of the most well-known polyesters that is widely used as packaging material, when the PET samples are preincubated with the hydrophobin. The wetting effect of rolA probably acts on PET surface to become hydrophilic, which leads PETase easier to contact and attack the surface. The sequence is that of Class I hydrophobin A from Aspergillus oryzae (strain ATCC 42149 / RIB 40) (Yellow koji mold).